We begin with the raw amino-acid sequence, 312 residues long: Ribosomal protein L11 methyltransferase (312 aa).

Thr-162, Gly-183, Asp-205, and Asn-248 together coordinate S-adenosyl-L-methionine.

Belongs to the methyltransferase superfamily. PrmA family.

The protein resides in the cytoplasm. The catalysed reaction is L-lysyl-[protein] + 3 S-adenosyl-L-methionine = N(6),N(6),N(6)-trimethyl-L-lysyl-[protein] + 3 S-adenosyl-L-homocysteine + 3 H(+). In terms of biological role, methylates ribosomal protein L11. The protein is Ribosomal protein L11 methyltransferase of Exiguobacterium sp. (strain ATCC BAA-1283 / AT1b).